The primary structure comprises 162 residues: NADH-quinone oxidoreductase subunit I (162 aa).

4Fe-4S ferredoxin-type domains lie at 54-83 (RRYE…INST) and 93-122 (SSYE…ETNI). The [4Fe-4S] cluster site is built by Cys63, Cys66, Cys69, Cys73, Cys102, Cys105, Cys108, and Cys112.

It belongs to the complex I 23 kDa subunit family. NDH-1 is composed of 14 different subunits. Subunits NuoA, H, J, K, L, M, N constitute the membrane sector of the complex. It depends on [4Fe-4S] cluster as a cofactor.

The protein resides in the cell inner membrane. The enzyme catalyses a quinone + NADH + 5 H(+)(in) = a quinol + NAD(+) + 4 H(+)(out). Its function is as follows. NDH-1 shuttles electrons from NADH, via FMN and iron-sulfur (Fe-S) centers, to quinones in the respiratory chain. The immediate electron acceptor for the enzyme in this species is believed to be ubiquinone. Couples the redox reaction to proton translocation (for every two electrons transferred, four hydrogen ions are translocated across the cytoplasmic membrane), and thus conserves the redox energy in a proton gradient. This Francisella tularensis subsp. holarctica (strain FTNF002-00 / FTA) protein is NADH-quinone oxidoreductase subunit I.